The primary structure comprises 352 residues: Ion-translocating oxidoreductase complex subunit D (352 aa).

The next 5 membrane-spanning stretches (helical) occupy residues 20–40 (IMLL…WFFG), 42–62 (GTLV…ALVL), 78–109 (ALLT…VIIA), 123–143 (PAMI…TSWL), and 148–168 (IAVN…GHTA). At T187 the chain carries FMN phosphoryl threonine. Helical transmembrane passes span 214-234 (ILAG…GLWL), 242-262 (WHIP…GWLF), 267-287 (LAAP…FFIL), 301-321 (LIFG…GGYP), and 322-342 (DGVA…DYYT).

It belongs to the NqrB/RnfD family. As to quaternary structure, the complex is composed of six subunits: RsxA, RsxB, RsxC, RsxD, RsxE and RsxG. FMN is required as a cofactor.

It is found in the cell inner membrane. Functionally, part of a membrane-bound complex that couples electron transfer with translocation of ions across the membrane. Required to maintain the reduced state of SoxR. This Escherichia coli (strain SE11) protein is Ion-translocating oxidoreductase complex subunit D.